The following is a 106-amino-acid chain: MRWMKIMSEDMKQEQSGEGRGGRGGPARPLASARRPFFRRRKVCPFCADKGLKIDYKDPKMLSRYITERGKMVPSRITGVCAPHQRKLSVAIKRARNIALLPFIVK.

Positions 1 to 32 (MRWMKIMSEDMKQEQSGEGRGGRGGPARPLAS) are disordered. Over residues 7–21 (MSEDMKQEQSGEGRG) the composition is skewed to basic and acidic residues.

This sequence belongs to the bacterial ribosomal protein bS18 family. Part of the 30S ribosomal subunit. Forms a tight heterodimer with protein bS6.

Functionally, binds as a heterodimer with protein bS6 to the central domain of the 16S rRNA, where it helps stabilize the platform of the 30S subunit. The protein is Small ribosomal subunit protein bS18 of Magnetococcus marinus (strain ATCC BAA-1437 / JCM 17883 / MC-1).